The sequence spans 69 residues: DNA gyrase inhibitor YacG (69 aa).

The segment at 1–28 (MSGEGKKHGSNVEPLRPTRPCPECGRPS) is disordered. Zn(2+)-binding residues include Cys21, Cys24, Cys36, and Cys40.

The protein belongs to the DNA gyrase inhibitor YacG family. In terms of assembly, interacts with GyrB. It depends on Zn(2+) as a cofactor.

In terms of biological role, inhibits all the catalytic activities of DNA gyrase by preventing its interaction with DNA. Acts by binding directly to the C-terminal domain of GyrB, which probably disrupts DNA binding by the gyrase. This is DNA gyrase inhibitor YacG from Sinorhizobium fredii (strain NBRC 101917 / NGR234).